The sequence spans 320 residues: ATP-dependent 6-phosphofructokinase isozyme 1 (320 aa).

Residue G12 coordinates ATP. ADP contacts are provided by residues 22–26 and 55–60; these read RGVVR and RYSVSD. ATP is bound by residues 73 to 74 and 103 to 106; these read RF and GDGS. D104 is a binding site for Mg(2+). Residue 126–128 coordinates substrate; that stretch reads TID. D128 functions as the Proton acceptor in the catalytic mechanism. Residue R155 participates in ADP binding. Residues R163 and 170-172 each bind substrate; that span reads MGR. Residues 186-188, K212, and 214-216 contribute to the ADP site; these read GCE and KKH. Substrate is bound by residues E223, R244, and 250–253; that span reads HIQR.

It belongs to the phosphofructokinase type A (PFKA) family. ATP-dependent PFK group I subfamily. Prokaryotic clade 'B1' sub-subfamily. In terms of assembly, homotetramer. Mg(2+) serves as cofactor.

The protein resides in the cytoplasm. It carries out the reaction beta-D-fructose 6-phosphate + ATP = beta-D-fructose 1,6-bisphosphate + ADP + H(+). It participates in carbohydrate degradation; glycolysis; D-glyceraldehyde 3-phosphate and glycerone phosphate from D-glucose: step 3/4. With respect to regulation, allosterically activated by ADP and other diphosphonucleosides, and allosterically inhibited by phosphoenolpyruvate. Functionally, catalyzes the phosphorylation of D-fructose 6-phosphate to fructose 1,6-bisphosphate by ATP, the first committing step of glycolysis. The chain is ATP-dependent 6-phosphofructokinase isozyme 1 from Escherichia coli O6:H1 (strain CFT073 / ATCC 700928 / UPEC).